Reading from the N-terminus, the 164-residue chain is SsrA-binding protein (164 aa).

Positions 141-164 (KLHDKRQDEKQKSIKREINSALKR) are disordered. Positions 145 to 158 (KRQDEKQKSIKREI) are enriched in basic and acidic residues.

The protein belongs to the SmpB family.

Its subcellular location is the cytoplasm. Its function is as follows. Required for rescue of stalled ribosomes mediated by trans-translation. Binds to transfer-messenger RNA (tmRNA), required for stable association of tmRNA with ribosomes. tmRNA and SmpB together mimic tRNA shape, replacing the anticodon stem-loop with SmpB. tmRNA is encoded by the ssrA gene; the 2 termini fold to resemble tRNA(Ala) and it encodes a 'tag peptide', a short internal open reading frame. During trans-translation Ala-aminoacylated tmRNA acts like a tRNA, entering the A-site of stalled ribosomes, displacing the stalled mRNA. The ribosome then switches to translate the ORF on the tmRNA; the nascent peptide is terminated with the 'tag peptide' encoded by the tmRNA and targeted for degradation. The ribosome is freed to recommence translation, which seems to be the essential function of trans-translation. This chain is SsrA-binding protein, found in Prochlorococcus marinus (strain MIT 9215).